Here is a 700-residue protein sequence, read N- to C-terminus: Mitosis inducer protein blt1 (700 aa).

Polar residues-rich tracts occupy residues 1-11 (MSKSAFTSKSQ) and 43-53 (PRSTALPNLSN). Disordered stretches follow at residues 1–53 (MSKS…NLSN) and 266–293 (TNNR…SKDQ). Positions 273–284 (GSDGSNSNFNGG) are enriched in low complexity. The stretch at 496 to 575 (SVALDDHNRQ…LNMLQKLSMQ (80 aa)) forms a coiled coil. Disordered regions lie at residues 634-659 (FSSF…RKPS) and 671-700 (SSGS…SSKM). The residue at position 636 (Ser-636) is a Phosphoserine.

Interacts with cdr2, mid1 and sad1.

The protein localises to the cytoplasm. Its subcellular location is the cytoskeleton. At the onset of mitosis, forms a medial ring structure before the arrangement of the medial actin ring. Essential for the central positioning of the division septum before the cell divides. The polypeptide is Mitosis inducer protein blt1 (blt1) (Schizosaccharomyces pombe (strain 972 / ATCC 24843) (Fission yeast)).